We begin with the raw amino-acid sequence, 233 residues long: uncharacterized protein (233 aa).

The protein belongs to the methyltransferase superfamily.

This is an uncharacterized protein from Bacillus subtilis (strain 168).